We begin with the raw amino-acid sequence, 384 residues long: tRNA-specific 2-thiouridylase MnmA (384 aa).

The tract at residues 1–26 is disordered; the sequence is MDEGIRASGGIRACQTGKQKQGRKRP. ATP-binding positions include 36-43 and methionine 62; that span reads GMSGGVDS. Residues 122–124 are interaction with target base in tRNA; it reads NPD. The Nucleophile role is filled by cysteine 127. Cysteine 127 and cysteine 223 are joined by a disulfide. Glycine 151 contacts ATP. The interval 173-175 is interaction with tRNA; sequence KDQ. Cysteine 223 acts as the Cysteine persulfide intermediate in catalysis. An interaction with tRNA region spans residues 334–335; that stretch reads RY.

Belongs to the MnmA/TRMU family.

Its subcellular location is the cytoplasm. The catalysed reaction is S-sulfanyl-L-cysteinyl-[protein] + uridine(34) in tRNA + AH2 + ATP = 2-thiouridine(34) in tRNA + L-cysteinyl-[protein] + A + AMP + diphosphate + H(+). Catalyzes the 2-thiolation of uridine at the wobble position (U34) of tRNA, leading to the formation of s(2)U34. The sequence is that of tRNA-specific 2-thiouridylase MnmA from Chromobacterium violaceum (strain ATCC 12472 / DSM 30191 / JCM 1249 / CCUG 213 / NBRC 12614 / NCIMB 9131 / NCTC 9757 / MK).